The following is a 667-amino-acid chain: DNA ligase (667 aa).

NAD(+)-binding positions include 32 to 36 (DSEYD), 81 to 82 (SL), and Glu110. Lys112 acts as the N6-AMP-lysine intermediate in catalysis. Residues Arg133, Glu167, Lys283, and Lys307 each contribute to the NAD(+) site. Cys401, Cys404, Cys419, and Cys424 together coordinate Zn(2+). The region spanning 586-667 (EGHPEFSGKT…FVDKQNELNS (82 aa)) is the BRCT domain.

The protein belongs to the NAD-dependent DNA ligase family. LigA subfamily. Mg(2+) is required as a cofactor. Mn(2+) serves as cofactor.

The enzyme catalyses NAD(+) + (deoxyribonucleotide)n-3'-hydroxyl + 5'-phospho-(deoxyribonucleotide)m = (deoxyribonucleotide)n+m + AMP + beta-nicotinamide D-nucleotide.. Its function is as follows. DNA ligase that catalyzes the formation of phosphodiester linkages between 5'-phosphoryl and 3'-hydroxyl groups in double-stranded DNA using NAD as a coenzyme and as the energy source for the reaction. It is essential for DNA replication and repair of damaged DNA. In Staphylococcus aureus (strain bovine RF122 / ET3-1), this protein is DNA ligase.